Here is a 272-residue protein sequence, read N- to C-terminus: Acetylglutamate kinase (272 aa).

Substrate contacts are provided by residues 41–42 (GG), R63, and N166.

The protein belongs to the acetylglutamate kinase family. ArgB subfamily.

It is found in the cytoplasm. The catalysed reaction is N-acetyl-L-glutamate + ATP = N-acetyl-L-glutamyl 5-phosphate + ADP. It functions in the pathway amino-acid biosynthesis; L-arginine biosynthesis; N(2)-acetyl-L-ornithine from L-glutamate: step 2/4. Functionally, catalyzes the ATP-dependent phosphorylation of N-acetyl-L-glutamate. The chain is Acetylglutamate kinase from Anaeromyxobacter dehalogenans (strain 2CP-1 / ATCC BAA-258).